A 606-amino-acid polypeptide reads, in one-letter code: KH domain-containing protein At4g18375 (606 aa).

A compositionally biased stretch (basic residues) spans 1-10 (MVERKKRKQI). A disordered region spans residues 1-26 (MVERKKRKQIQRNNSESNRNQKRRIS). KH domains follow at residues 35–99 (LVVY…IGFT), 138–210 (NKEC…LFAV), 311–380 (ELVF…VEAV), 394–455 (NVKM…LIQI), and 535–599 (SSAL…ENLV).

It is found in the nucleus. This chain is KH domain-containing protein At4g18375, found in Arabidopsis thaliana (Mouse-ear cress).